We begin with the raw amino-acid sequence, 349 residues long: Small ribosomal subunit protein uS2 (349 aa).

It belongs to the universal ribosomal protein uS2 family.

The chain is Small ribosomal subunit protein uS2 from Methylobacterium sp. (strain 4-46).